Consider the following 729-residue polypeptide: ATP-dependent RNA helicase DHX15 homolog (729 aa).

Positions 1 to 25 (MSKRRIEVGETYGSKAKKDPEASSS) are disordered. The 165-residue stretch at 82-246 (MRLLSLHQCI…FDNAPLMKVP (165 aa)) folds into the Helicase ATP-binding domain. 95–102 (GETGSGKT) contacts ATP. Residues 193–196 (DEAH) carry the DEAH box motif. The 181-residue stretch at 271-451 (TVIQIHMCEE…TVVLQLKKLG (181 aa)) folds into the Helicase C-terminal domain.

This sequence belongs to the DEAD box helicase family. DEAH subfamily. DDX15/PRP43 sub-subfamily.

It carries out the reaction ATP + H2O = ADP + phosphate + H(+). RNA helicase involved in mRNA processing and antiviral innate immunity. Acts as an activator of the p38 MAPK cascade. The protein is ATP-dependent RNA helicase DHX15 homolog of Drosophila melanogaster (Fruit fly).